A 78-amino-acid chain; its full sequence is Sperm-specific protein Phi-0 (78 aa).

Basic residues-rich tracts occupy residues 1-21, 31-57, and 64-78; these read MVARRQTKKARKPAARRRSAA, AASRRRPKSAKKAKPAARRRSSVKPKA, and VRRRSRRIRRASVSK. Residues 1–78 are disordered; the sequence is MVARRQTKKA…RRIRRASVSK (78 aa).

It is found in the nucleus. It localises to the chromosome. Functionally, involved in nuclear basic protein transition: histones are replaced by spermatid specific proteins which are themselves replaced by protamines in late spermatids. This chain is Sperm-specific protein Phi-0, found in Holothuria tubulosa (Tubular sea cucumber).